Here is a 282-residue protein sequence, read N- to C-terminus: Formamidopyrimidine-DNA glycosylase (282 aa).

Catalysis depends on proline 2, which acts as the Schiff-base intermediate with DNA. The active-site Proton donor is the glutamate 3. Lysine 61 (proton donor; for beta-elimination activity) is an active-site residue. Histidine 93, arginine 112, and lysine 158 together coordinate DNA. An FPG-type zinc finger spans residues 244-278 (DAYGREGEPCRRCGAIMRRDKFMNRSSFYCPRCQP). Arginine 268 functions as the Proton donor; for delta-elimination activity in the catalytic mechanism.

The protein belongs to the FPG family. In terms of assembly, monomer. The cofactor is Zn(2+).

It catalyses the reaction Hydrolysis of DNA containing ring-opened 7-methylguanine residues, releasing 2,6-diamino-4-hydroxy-5-(N-methyl)formamidopyrimidine.. The catalysed reaction is 2'-deoxyribonucleotide-(2'-deoxyribose 5'-phosphate)-2'-deoxyribonucleotide-DNA = a 3'-end 2'-deoxyribonucleotide-(2,3-dehydro-2,3-deoxyribose 5'-phosphate)-DNA + a 5'-end 5'-phospho-2'-deoxyribonucleoside-DNA + H(+). Functionally, involved in base excision repair of DNA damaged by oxidation or by mutagenic agents. Acts as a DNA glycosylase that recognizes and removes damaged bases. Has a preference for oxidized purines, such as 7,8-dihydro-8-oxoguanine (8-oxoG). Has AP (apurinic/apyrimidinic) lyase activity and introduces nicks in the DNA strand. Cleaves the DNA backbone by beta-delta elimination to generate a single-strand break at the site of the removed base with both 3'- and 5'-phosphates. This chain is Formamidopyrimidine-DNA glycosylase, found in Mycolicibacterium gilvum (strain PYR-GCK) (Mycobacterium gilvum (strain PYR-GCK)).